Here is a 304-residue protein sequence, read N- to C-terminus: Sperm microtubule inner protein 6 (304 aa).

This sequence belongs to the SPMIP6 family. As to quaternary structure, microtubule inner protein component of sperm flagellar doublet microtubules. Interacts with alpha-tubulin.

It localises to the cytoplasm. It is found in the cytoskeleton. The protein resides in the nucleus. Its subcellular location is the mitochondrion. The protein localises to the flagellum axoneme. May participate in intramanchette transport and midpiece formation of the sperm tail. May play a potential role in somatic cell proliferation. The sequence is that of Sperm microtubule inner protein 6 (SPMIP6) from Bos taurus (Bovine).